We begin with the raw amino-acid sequence, 402 residues long: Flavohemoprotein (402 aa).

The 138-residue stretch at 1–138 (MLSPEVRALV…LADLLIGRER (138 aa)) folds into the Globin domain. His-85 contacts heme b. Active-site charge relay system residues include Tyr-95 and Glu-137. Residues 149 to 402 (GGWTGWRAFK…AEVFGTGGVA (254 aa)) are reductase. One can recognise an FAD-binding FR-type domain in the interval 152 to 261 (TGWRAFKVVR…SPPQGDFTLD (110 aa)). FAD is bound by residues Tyr-190 and 206–209 (RQYS). 274-279 (GVGLTP) provides a ligand contact to NADP(+). Residue 395-398 (VFGT) coordinates FAD.

It belongs to the globin family. Two-domain flavohemoproteins subfamily. The protein in the C-terminal section; belongs to the flavoprotein pyridine nucleotide cytochrome reductase family. Requires heme b as cofactor. FAD serves as cofactor.

It catalyses the reaction 2 nitric oxide + NADPH + 2 O2 = 2 nitrate + NADP(+) + H(+). The enzyme catalyses 2 nitric oxide + NADH + 2 O2 = 2 nitrate + NAD(+) + H(+). In terms of biological role, is involved in NO detoxification in an aerobic process, termed nitric oxide dioxygenase (NOD) reaction that utilizes O(2) and NAD(P)H to convert NO to nitrate, which protects the bacterium from various noxious nitrogen compounds. Therefore, plays a central role in the inducible response to nitrosative stress. In Bordetella bronchiseptica (strain ATCC BAA-588 / NCTC 13252 / RB50) (Alcaligenes bronchisepticus), this protein is Flavohemoprotein.